An 82-amino-acid chain; its full sequence is Small ribosomal subunit protein eS27 (82 aa).

4 residues coordinate Zn(2+): C37, C40, C56, and C59.

Belongs to the eukaryotic ribosomal protein eS27 family. In terms of assembly, component of the small ribosomal subunit. Mature ribosomes consist of a small (40S) and a large (60S) subunit. The 40S subunit contains about 32 different proteins and 1 molecule of RNA (18S). The 60S subunit contains 45 different proteins and 3 molecules of RNA (25S, 5.8S and 5S). The cofactor is Zn(2+).

It is found in the cytoplasm. Its function is as follows. Component of the ribosome, a large ribonucleoprotein complex responsible for the synthesis of proteins in the cell. The small ribosomal subunit (SSU) binds messenger RNAs (mRNAs) and translates the encoded message by selecting cognate aminoacyl-transfer RNA (tRNA) molecules. The large subunit (LSU) contains the ribosomal catalytic site termed the peptidyl transferase center (PTC), which catalyzes the formation of peptide bonds, thereby polymerizing the amino acids delivered by tRNAs into a polypeptide chain. The nascent polypeptides leave the ribosome through a tunnel in the LSU and interact with protein factors that function in enzymatic processing, targeting, and the membrane insertion of nascent chains at the exit of the ribosomal tunnel. The sequence is that of Small ribosomal subunit protein eS27 (RPS27) from Candida albicans (strain SC5314 / ATCC MYA-2876) (Yeast).